A 314-amino-acid chain; its full sequence is Olfactory receptor 14K1 (314 aa).

Residues 1–23 lie on the Extracellular side of the membrane; it reads MTNQTQMMEFLLVRFTENWVLLR. An N-linked (GlcNAc...) asparagine glycan is attached at asparagine 3. A helical membrane pass occupies residues 24–44; it reads LHALLFSLIYLTAVLMNLVII. Residues 45–52 are Cytoplasmic-facing; it reads LLMILDHR. The chain crosses the membrane as a helical span at residues 53–73; that stretch reads LHMAMYFFLRHLSFLDLCLIS. Residues 74-97 are Extracellular-facing; the sequence is ATVPKSILNSVASTDSISFLGCVL. Cysteine 95 and cysteine 187 are disulfide-bonded. Residues 98 to 118 traverse the membrane as a helical segment; the sequence is QLFLVVLLAGSEIGILTAMSY. At 119–131 the chain is on the cytoplasmic side; the sequence is DRYAAICCPLHCE. The chain crosses the membrane as a helical span at residues 132 to 152; it reads AVMSRGLCVQLMALSWLNRGA. The Extracellular portion of the chain corresponds to 153–194; it reads LGLLYTAGTFSLNFYGSDELHQFFCDVPALLKLTCSKEHAII. A helical membrane pass occupies residues 195–215; it reads SVSVAIGVCYAFSCLVCIVVS. At 216–235 the chain is on the cytoplasmic side; it reads YVYIFSAVLRISQRQRQSKA. Residues 236–256 form a helical membrane-spanning segment; the sequence is FSNCVPHLIVVTVFLVTGAVA. At 257–269 the chain is on the extracellular side; it reads YLKPGSDAPSILD. Residues 270-290 traverse the membrane as a helical segment; it reads LLVSVFYSVAPPTLNPVIYCL. Residues 291–314 lie on the Cytoplasmic side of the membrane; that stretch reads KNKDIKSALSKVLWNVRSSGVMKR.

It belongs to the G-protein coupled receptor 1 family.

It localises to the cell membrane. Its function is as follows. Odorant receptor. This Homo sapiens (Human) protein is Olfactory receptor 14K1 (OR14K1).